Reading from the N-terminus, the 825-residue chain is NT-3 growth factor receptor (825 aa).

The first 31 residues, 1 to 31 (MDVSLCPAKCSFWRIFLLGSVWLDYVGSVLA), serve as a signal peptide directing secretion. 2 cysteine pairs are disulfide-bonded: C32–C38 and C36–C45. Residues 32–429 (CPANCVCSKT…TVTHKPEEDT (398 aa)) lie on the Extracellular side of the membrane. N68, N72, and N79 each carry an N-linked (GlcNAc...) asparagine glycan. LRR repeat units follow at residues 104-125 (GLQK…AFAK) and 128-149 (HLRY…LFQT). N-linked (GlcNAc...) asparagine glycosylation is found at N133 and N163. The LRRCT domain maps to 160 to 209 (NFFNCSCDIRWMQLWQEQGEARLNSQNLYCINADGSQLPLFRMNISQCDL). 2 disulfide bridges follow: C164–C189 and C166–C207. Residues N203, N218, N232, N259, N267, N272, and N294 are each glycosylated (N-linked (GlcNAc...) asparagine). 2 consecutive Ig-like C2-type domains span residues 210-300 (PEIS…VALT) and 309-382 (SLEE…IAKN). A disulfide bridge connects residues C231 and C284. Cysteines 320 and 362 form a disulfide. 2 N-linked (GlcNAc...) asparagine glycosylation sites follow: N375 and N388. The helical transmembrane segment at 430–453 (FGVSIAVGLAAFACVLLVVLFIMI) threads the bilayer. At 454–825 (NKYGRRSKFG…ATPIYLDILG (372 aa)) the chain is on the cytoplasmic side. S493 carries the phosphoserine modification. Residue Y516 is modified to Phosphotyrosine; by autocatalysis. In terms of domain architecture, Protein kinase spans 538–825 (IVLKRELGEG…ATPIYLDILG (288 aa)). Residues 544-552 (LGEGAFGKV) and K572 each bind ATP. D679 serves as the catalytic Proton acceptor. Y705, Y709, and Y710 each carry phosphotyrosine; by autocatalysis.

This sequence belongs to the protein kinase superfamily. Tyr protein kinase family. Insulin receptor subfamily. As to quaternary structure, exists in a dynamic equilibrium between monomeric (low affinity) and dimeric (high affinity) structures. Binds SH2B2. Interacts with SQSTM1 and KIDINS220. Interacts with PTPRS. Interacts with MAPK8IP3/JIP3. Post-translationally, ligand-mediated auto-phosphorylation.

Its subcellular location is the membrane. The enzyme catalyses L-tyrosyl-[protein] + ATP = O-phospho-L-tyrosyl-[protein] + ADP + H(+). Functionally, receptor tyrosine kinase involved in nervous system and probably heart development. Upon binding of its ligand NTF3/neurotrophin-3, NTRK3 autophosphorylates and activates different signaling pathways, including the phosphatidylinositol 3-kinase/AKT and the MAPK pathways, that control cell survival and differentiation. The polypeptide is NT-3 growth factor receptor (NTRK3) (Saimiri boliviensis boliviensis (Bolivian squirrel monkey)).